The primary structure comprises 352 residues: Glycerol-3-phosphate dehydrogenase [NAD(P)+] (352 aa).

NADPH-binding residues include Ser-11, Trp-12, Arg-32, and Lys-105. Sn-glycerol 3-phosphate is bound by residues Lys-105, Gly-133, and Ser-135. Residue Ala-137 coordinates NADPH. Residues Lys-188, Asp-241, Ser-251, Arg-252, and Asn-253 each contribute to the sn-glycerol 3-phosphate site. Residue Lys-188 is the Proton acceptor of the active site. Residue Arg-252 participates in NADPH binding. NADPH is bound by residues Val-276 and Glu-278.

It belongs to the NAD-dependent glycerol-3-phosphate dehydrogenase family.

The protein localises to the cytoplasm. The catalysed reaction is sn-glycerol 3-phosphate + NAD(+) = dihydroxyacetone phosphate + NADH + H(+). It carries out the reaction sn-glycerol 3-phosphate + NADP(+) = dihydroxyacetone phosphate + NADPH + H(+). The protein operates within membrane lipid metabolism; glycerophospholipid metabolism. Functionally, catalyzes the reduction of the glycolytic intermediate dihydroxyacetone phosphate (DHAP) to sn-glycerol 3-phosphate (G3P), the key precursor for phospholipid synthesis. This is Glycerol-3-phosphate dehydrogenase [NAD(P)+] from Desulfitobacterium hafniense (strain Y51).